The chain runs to 694 residues: Methionine--tRNA ligase (694 aa).

The short motif at 14–24 is the 'HIGH' region element; sequence PYANGPIHLGH. Cys145, Cys148, Cys158, and Cys161 together coordinate Zn(2+). The 'KMSKS' region motif lies at 330-334; that stretch reads KMSKS. Residue Lys333 participates in ATP binding. Positions 558–579 are disordered; the sequence is SLQATAGQPEPHSQVRHAEHQQ. One can recognise a tRNA-binding domain in the interval 593-694; the sequence is DFAKVDLRIA…EGAQPGMKVK (102 aa).

Belongs to the class-I aminoacyl-tRNA synthetase family. MetG type 1 subfamily. In terms of assembly, homodimer. Zn(2+) serves as cofactor.

The protein resides in the cytoplasm. The enzyme catalyses tRNA(Met) + L-methionine + ATP = L-methionyl-tRNA(Met) + AMP + diphosphate. Functionally, is required not only for elongation of protein synthesis but also for the initiation of all mRNA translation through initiator tRNA(fMet) aminoacylation. The protein is Methionine--tRNA ligase of Methylococcus capsulatus (strain ATCC 33009 / NCIMB 11132 / Bath).